The sequence spans 115 residues: Large ribosomal subunit protein bL20 (115 aa).

It belongs to the bacterial ribosomal protein bL20 family.

Its function is as follows. Binds directly to 23S ribosomal RNA and is necessary for the in vitro assembly process of the 50S ribosomal subunit. It is not involved in the protein synthesizing functions of that subunit. In Prochlorococcus marinus (strain MIT 9313), this protein is Large ribosomal subunit protein bL20.